Reading from the N-terminus, the 689-residue chain is DNA ligase (689 aa).

NAD(+) is bound by residues 40–44 (DSEYD), 89–90 (SL), and glutamate 121. The active-site N6-AMP-lysine intermediate is lysine 123. Residues arginine 144, glutamate 179, lysine 295, and lysine 319 each coordinate NAD(+). Cysteine 413, cysteine 416, cysteine 431, and cysteine 437 together coordinate Zn(2+). One can recognise a BRCT domain in the interval 610–689 (REQSSLTDKI…EEWLTLIKNV (80 aa)).

It belongs to the NAD-dependent DNA ligase family. LigA subfamily. Requires Mg(2+) as cofactor. It depends on Mn(2+) as a cofactor.

The enzyme catalyses NAD(+) + (deoxyribonucleotide)n-3'-hydroxyl + 5'-phospho-(deoxyribonucleotide)m = (deoxyribonucleotide)n+m + AMP + beta-nicotinamide D-nucleotide.. In terms of biological role, DNA ligase that catalyzes the formation of phosphodiester linkages between 5'-phosphoryl and 3'-hydroxyl groups in double-stranded DNA using NAD as a coenzyme and as the energy source for the reaction. It is essential for DNA replication and repair of damaged DNA. In Rickettsia rickettsii (strain Iowa), this protein is DNA ligase.